The chain runs to 450 residues: Homogentisate 1,2-dioxygenase (450 aa).

Histidine 304 (proton acceptor) is an active-site residue. Histidine 347 and glutamate 353 together coordinate Fe cation. Homogentisate-binding residues include tyrosine 362 and histidine 383. Residue histidine 383 coordinates Fe cation.

This sequence belongs to the homogentisate dioxygenase family. Hexamer; dimer of trimers. It depends on Fe cation as a cofactor.

It carries out the reaction homogentisate + O2 = 4-maleylacetoacetate + H(+). The protein operates within amino-acid degradation; L-phenylalanine degradation; acetoacetate and fumarate from L-phenylalanine: step 4/6. In terms of biological role, involved in the catabolism of homogentisate (2,5-dihydroxyphenylacetate or 2,5-OH-PhAc), a central intermediate in the degradation of phenylalanine and tyrosine. Catalyzes the oxidative ring cleavage of the aromatic ring of homogentisate to yield maleylacetoacetate. This is Homogentisate 1,2-dioxygenase from Burkholderia thailandensis (strain ATCC 700388 / DSM 13276 / CCUG 48851 / CIP 106301 / E264).